We begin with the raw amino-acid sequence, 1105 residues long: Protein phosphatase 1 regulatory subunit 26 (1105 aa).

4 disordered regions span residues 228–382, 444–468, 504–526, and 589–748; these read LNDK…NKLA, QSTY…DSLV, TSPE…AKAM, and LNRG…DSDD. The segment covering 275-285 has biased composition (basic and acidic residues); that stretch reads LLRKHASDSKL. The segment covering 306-317 has biased composition (low complexity); that stretch reads TKTSSPSPKSTP. Polar residues predominate over residues 359-368; the sequence is SPTSANSLTH. Residues 451 to 460 are compositionally biased toward pro residues; it reads TEPPPPPPEP. Positions 504 to 516 are enriched in polar residues; the sequence is TSPELGSQSSKLS. Residues 602 to 612 are compositionally biased toward low complexity; sequence SYSSGDKSSSL. Residues 628–647 are compositionally biased toward basic residues; that stretch reads SKRKYKKRPKDGKSQCKKRV. Residues 686–701 are compositionally biased toward basic and acidic residues; that stretch reads NSLEKSKKRREEKAVE. Polar residues predominate over residues 705-715; sequence PSCSSSPQGNK. Positions 733 to 742 are enriched in basic and acidic residues; the sequence is RALDDAHESS.

It localises to the nucleus. Its subcellular location is the nucleolus. Its function is as follows. May inhibit phosphatase activity of protein phosphatase 1 (PP1) complexes. May positively regulate cell proliferation. The sequence is that of Protein phosphatase 1 regulatory subunit 26 (ppp1r26) from Xenopus laevis (African clawed frog).